A 345-amino-acid polypeptide reads, in one-letter code: Methionine import ATP-binding protein MetN 2 (345 aa).

In terms of domain architecture, ABC transporter spans 4–243 (IELRHVKKEF…PQTEIAKRFI (240 aa)). 40-47 (GYSGAGKS) is an ATP binding site.

This sequence belongs to the ABC transporter superfamily. Methionine importer (TC 3.A.1.24) family. In terms of assembly, the complex is composed of two ATP-binding proteins (MetN), two transmembrane proteins (MetI) and a solute-binding protein (MetQ).

It localises to the cell membrane. It catalyses the reaction L-methionine(out) + ATP + H2O = L-methionine(in) + ADP + phosphate + H(+). The catalysed reaction is D-methionine(out) + ATP + H2O = D-methionine(in) + ADP + phosphate + H(+). Its function is as follows. Part of the ABC transporter complex MetNIQ involved in methionine import. Responsible for energy coupling to the transport system. The protein is Methionine import ATP-binding protein MetN 2 of Enterococcus faecalis (strain ATCC 700802 / V583).